The following is a 561-amino-acid chain: Oxygen-dependent choline dehydrogenase (561 aa).

6-35 contributes to the FAD binding site; it reads DYIIIGAGSAGNVLATRLTEDADVSVLLLE. Histidine 475 (proton acceptor) is an active-site residue.

It belongs to the GMC oxidoreductase family. The cofactor is FAD.

It catalyses the reaction choline + A = betaine aldehyde + AH2. The enzyme catalyses betaine aldehyde + NAD(+) + H2O = glycine betaine + NADH + 2 H(+). It functions in the pathway amine and polyamine biosynthesis; betaine biosynthesis via choline pathway; betaine aldehyde from choline (cytochrome c reductase route): step 1/1. In terms of biological role, involved in the biosynthesis of the osmoprotectant glycine betaine. Catalyzes the oxidation of choline to betaine aldehyde and betaine aldehyde to glycine betaine at the same rate. The polypeptide is Oxygen-dependent choline dehydrogenase (Pseudomonas aeruginosa (strain LESB58)).